A 356-amino-acid polypeptide reads, in one-letter code: MRRQLRSRRAPAFPYGYRYRLDDQDEANHNYLADEEEEAEEEAQVMMVPGLEEEEEEEEGKEEEEEREEEEGQGQSTGSAWWRKLQIVNEYLWDPEKRMSLARTGQSRSLILVIYFFFYASLAAVITLFIYMLFLAISPYMPTFTEQVKPPGVMIRPFAHSLNFNFNVSEPETWQRYVISLNGFLQGYNDSLQEEMNIDCPPGRYFIQDGDEDEDKKACQFKRSFLKNCSGLEDPTFGYSTGQPCILLKMNRIVGFRPEFGDPVKVSCKVQKGDENDIRSINYYPESASFDLRYYPYYGKLTHVNYTSPLVAMHFTDVVKNQAVPVQCQLKGKGIVNDVINDRFVGRIIFTLNIET.

Residues 1–109 are Nuclear-facing; the sequence is MRRQLRSRRA…SLARTGQSRS (109 aa). Positions 26 to 78 are disordered; the sequence is EANHNYLADEEEEAEEEAQVMMVPGLEEEEEEEEGKEEEEEREEEEGQGQSTG. Acidic residues-rich tracts occupy residues 33–43 and 51–72; these read ADEEEEAEEEA and LEEEEEEEEGKEEEEEREEEEG. A helical; Signal-anchor for type II membrane protein transmembrane segment spans residues 110–130; the sequence is LILVIYFFFYASLAAVITLFI. The Perinuclear space portion of the chain corresponds to 131–356; it reads YMLFLAISPY…RIIFTLNIET (226 aa).

The protein belongs to the X(+)/potassium ATPases subunit beta family. As to quaternary structure, associates with a SMAD7-transcriptional complex. Interacts with TOR1AIP1. Does not associate with known Na,K-ATPase alpha-subunits. Interacts with SNW1. Expressed in skeletal muscle (at protein level). Expressed during postnatal development in skeletal muscle and heart.

It is found in the nucleus inner membrane. Functionally, may act as a transcriptional coregulator during muscle development through its interaction with SNW1. Has lost its ancestral function as a Na,K-ATPase beta-subunit. In Mus musculus (Mouse), this protein is Protein ATP1B4 (Atp1b4).